A 292-amino-acid polypeptide reads, in one-letter code: Phosphatidylserine decarboxylase proenzyme (292 aa).

Residues D89, H146, and S252 each act as charge relay system; for autoendoproteolytic cleavage activity in the active site. Residue S252 is the Schiff-base intermediate with substrate; via pyruvic acid; for decarboxylase activity of the active site. At S252 the chain carries Pyruvic acid (Ser); by autocatalysis.

It belongs to the phosphatidylserine decarboxylase family. PSD-B subfamily. Prokaryotic type I sub-subfamily. Heterodimer of a large membrane-associated beta subunit and a small pyruvoyl-containing alpha subunit. Requires pyruvate as cofactor. Is synthesized initially as an inactive proenzyme. Formation of the active enzyme involves a self-maturation process in which the active site pyruvoyl group is generated from an internal serine residue via an autocatalytic post-translational modification. Two non-identical subunits are generated from the proenzyme in this reaction, and the pyruvate is formed at the N-terminus of the alpha chain, which is derived from the carboxyl end of the proenzyme. The autoendoproteolytic cleavage occurs by a canonical serine protease mechanism, in which the side chain hydroxyl group of the serine supplies its oxygen atom to form the C-terminus of the beta chain, while the remainder of the serine residue undergoes an oxidative deamination to produce ammonia and the pyruvoyl prosthetic group on the alpha chain. During this reaction, the Ser that is part of the protease active site of the proenzyme becomes the pyruvoyl prosthetic group, which constitutes an essential element of the active site of the mature decarboxylase.

The protein resides in the cell membrane. It catalyses the reaction a 1,2-diacyl-sn-glycero-3-phospho-L-serine + H(+) = a 1,2-diacyl-sn-glycero-3-phosphoethanolamine + CO2. The protein operates within phospholipid metabolism; phosphatidylethanolamine biosynthesis; phosphatidylethanolamine from CDP-diacylglycerol: step 2/2. In terms of biological role, catalyzes the formation of phosphatidylethanolamine (PtdEtn) from phosphatidylserine (PtdSer). The chain is Phosphatidylserine decarboxylase proenzyme from Shewanella baltica (strain OS185).